Here is a 373-residue protein sequence, read N- to C-terminus: Peroxisomal biogenesis factor 3 (373 aa).

The Cytoplasmic segment spans residues 1–15; it reads MFRSTWNFLKRHKKK. Positions 1–45 are targeting to peroxisomes; the sequence is MFRSTWNFLKRHKKKCIFLGTVLGGVYILGKYGQKKIREIQEREA. Residues 16 to 36 form a helical membrane-spanning segment; it reads CIFLGTVLGGVYILGKYGQKK. The Peroxisomal portion of the chain corresponds to 37–116; the sequence is IREIQEREAA…LKIISFTRSI (80 aa). The chain crosses the membrane as a helical span at residues 117-140; the sequence is VAVYSTCMLVVLLRVQLNIIGGYI. The interaction with PEX19 stretch occupies residues 120 to 136; sequence YSTCMLVVLLRVQLNII. The Cytoplasmic segment spans residues 141-373; sequence YLDNAAVGKN…AFSTPQQLEK (233 aa).

The protein belongs to the peroxin-3 family. As to quaternary structure, interacts with PEX19.

It is found in the peroxisome membrane. Its function is as follows. Involved in peroxisome biosynthesis and integrity. Assembles membrane vesicles before the matrix proteins are translocated. As a docking factor for PEX19, is necessary for the import of peroxisomal membrane proteins in the peroxisomes. The polypeptide is Peroxisomal biogenesis factor 3 (PEX3) (Bos taurus (Bovine)).